The chain runs to 180 residues: MAKIGLFFGSNTGKTRKVAKSIKKRFDDETMSDALNVNRVSAEDFAQYQFLILGTPTLGEGELPGLSSDCENESWEEFLPKIEGLDFSGKTVALFGLGDQVGYPENYLDALGELYSFFKDRGAKIVGSWSTDGYEFESSEAVVDGKFVGLALDLDNQSGKTDERVAAWLAQIAPEFGLSL.

Positions 4–173 (IGLFFGSNTG…RVAAWLAQIA (170 aa)) constitute a Flavodoxin-like domain. FMN is bound by residues 10–15 (SNTGKT), Thr-57, Gly-61, Asp-99, 106–108 (NYL), and Asp-155.

FMN serves as cofactor.

Its function is as follows. Flavodoxins are low-potential electron donors to a number of redox enzymes. NifF is the electron donor to nitrogenase, and is thus implicated in nitrogen fixation. Does not function as an electron donor to nitrite reductase. The polypeptide is Flavodoxin 2 (Azotobacter vinelandii).